Here is a 189-residue protein sequence, read N- to C-terminus: Glucose-6-phosphate isomerase (189 aa).

Fe cation-binding residues include His88, His90, Glu97, and His136.

This sequence belongs to the archaeal-type GPI family. In terms of assembly, homodimer. Fe cation is required as a cofactor.

The protein resides in the cytoplasm. It catalyses the reaction alpha-D-glucose 6-phosphate = beta-D-fructose 6-phosphate. The protein operates within carbohydrate degradation; glycolysis; D-glyceraldehyde 3-phosphate and glycerone phosphate from D-glucose: step 2/4. Its activity is regulated as follows. Inhibited by mannose 6-phosphate, fructose 1-phosphate and fructose 1,6-bisphosphate. The sequence is that of Glucose-6-phosphate isomerase (pgiA) from Pyrococcus furiosus (strain ATCC 43587 / DSM 3638 / JCM 8422 / Vc1).